The sequence spans 108 residues: uncharacterized protein (108 aa).

This is an uncharacterized protein from Schizosaccharomyces pombe (strain 972 / ATCC 24843) (Fission yeast).